The following is a 461-amino-acid chain: Cysteine--tRNA ligase (461 aa).

Zn(2+) is bound at residue C28. Positions 30-40 match the 'HIGH' region motif; the sequence is ITVYDLCHIGH. Positions 209, 234, and 238 each coordinate Zn(2+). Residues 266–270 carry the 'KMSKS' region motif; that stretch reads KMSKS. K269 serves as a coordination point for ATP.

It belongs to the class-I aminoacyl-tRNA synthetase family. In terms of assembly, monomer. Zn(2+) serves as cofactor.

The protein localises to the cytoplasm. It carries out the reaction tRNA(Cys) + L-cysteine + ATP = L-cysteinyl-tRNA(Cys) + AMP + diphosphate. This Escherichia coli O127:H6 (strain E2348/69 / EPEC) protein is Cysteine--tRNA ligase.